Consider the following 226-residue polypeptide: Putative ABC transporter ATP-binding protein BQ02700 (226 aa).

Residues 4-225 enclose the ABC transporter domain; the sequence is IKFDKVTQVF…VAIKEYIRRM (222 aa). 35-42 provides a ligand contact to ATP; that stretch reads GANGSGKS.

The protein belongs to the ABC transporter superfamily.

It is found in the cell inner membrane. Its function is as follows. Probably part of an ABC transporter complex. Responsible for energy coupling to the transport system. In Bartonella quintana (strain Toulouse) (Rochalimaea quintana), this protein is Putative ABC transporter ATP-binding protein BQ02700.